A 159-amino-acid polypeptide reads, in one-letter code: Endoribonuclease YbeY (159 aa).

Residues His-125, His-129, and His-135 each contribute to the Zn(2+) site.

Belongs to the endoribonuclease YbeY family. It depends on Zn(2+) as a cofactor.

The protein localises to the cytoplasm. Functionally, single strand-specific metallo-endoribonuclease involved in late-stage 70S ribosome quality control and in maturation of the 3' terminus of the 16S rRNA. This chain is Endoribonuclease YbeY, found in Ligilactobacillus salivarius (strain UCC118) (Lactobacillus salivarius).